Reading from the N-terminus, the 323-residue chain is Polycomb complex protein BMI-1-B (323 aa).

The segment at 18 to 57 (CVLCGGYFIDAATIIECLHSFCKTCIVRYLETSKYCPICD) adopts an RING-type zinc-finger fold. A Nuclear localization signal motif is present at residues 81–95 (KLVPGLFKGEMKRRR). A disordered region spans residues 238–310 (PHTDRINNTS…HQNPFANRAR (73 aa)). The span at 287-301 (HISSTINGTNSSSSH) shows a compositional bias: low complexity.

As to quaternary structure, component of a PRC1-like complex. Interacts with cbx4.

The protein localises to the nucleus. Its function is as follows. Component of a Polycomb group (PcG) multiprotein PRC1-like complex, a complex class required to maintain the transcriptionally repressive state of many genes, including Hox genes, throughout development. PcG PRC1 complex acts via chromatin remodeling and modification of histones; it mediates monoubiquitination of histone H2A 'Lys-119', rendering chromatin heritably changed in its expressibility. In the PRC1 complex, it is required to stimulate the E3 ubiquitin-protein ligase activity of rnf2. The chain is Polycomb complex protein BMI-1-B (bmi1b) from Xenopus laevis (African clawed frog).